The sequence spans 23 residues: Coenzyme PQQ synthesis protein A (23 aa).

The segment at residues 15 to 19 is a cross-link (pyrroloquinoline quinone (Glu-Tyr)); the sequence is EVTMY.

Belongs to the PqqA family.

It functions in the pathway cofactor biosynthesis; pyrroloquinoline quinone biosynthesis. Functionally, required for coenzyme pyrroloquinoline quinone (PQQ) biosynthesis. PQQ is probably formed by cross-linking a specific glutamate to a specific tyrosine residue and excising these residues from the peptide. This is Coenzyme PQQ synthesis protein A from Pseudomonas putida (strain W619).